The primary structure comprises 924 residues: WSC domain-containing protein ARB_07867 (924 aa).

Positions Met1–Ser24 are cleaved as a signal peptide. One can recognise a WSC 1 domain in the interval Thr62–Thr160. A glycan (N-linked (GlcNAc...) asparagine) is linked at Asn90. The segment at Asp166–Gln190 is disordered. Residues Thr169 to Thr189 are compositionally biased toward low complexity. The WSC 2 domain maps to Gly195 to Gly289. N-linked (GlcNAc...) asparagine glycans are attached at residues Asn290, Asn333, Asn387, Asn455, Asn552, Asn758, and Asn833. The WSC 3 domain maps to Gly307–Met404.

The protein localises to the secreted. In Arthroderma benhamiae (strain ATCC MYA-4681 / CBS 112371) (Trichophyton mentagrophytes), this protein is WSC domain-containing protein ARB_07867.